The chain runs to 422 residues: Glucose-1-phosphate adenylyltransferase (422 aa).

Alpha-D-glucose 1-phosphate-binding positions include Tyr-109, Gly-175, 190–191, and Ser-208; that span reads EK.

Belongs to the bacterial/plant glucose-1-phosphate adenylyltransferase family. In terms of assembly, homotetramer.

It carries out the reaction alpha-D-glucose 1-phosphate + ATP + H(+) = ADP-alpha-D-glucose + diphosphate. It participates in glycan biosynthesis; glycogen biosynthesis. Its function is as follows. Involved in the biosynthesis of ADP-glucose, a building block required for the elongation reactions to produce glycogen. Catalyzes the reaction between ATP and alpha-D-glucose 1-phosphate (G1P) to produce pyrophosphate and ADP-Glc. This chain is Glucose-1-phosphate adenylyltransferase, found in Shewanella amazonensis (strain ATCC BAA-1098 / SB2B).